The following is a 447-amino-acid chain: Probable 3-deoxy-D-manno-octulosonic acid transferase, mitochondrial (447 aa).

The transit peptide at 1–32 (MKLGVFVYRLYRALTYGVSPLIHLHIRWRRLR) directs the protein to the mitochondrion. The active-site Proton acceptor is the glutamate 66. Residues 278–279 (PR), 320–322 (LGE), and 347–350 (NLSE) each bind CMP.

Belongs to the glycosyltransferase group 1 family. Glycosyltransferase 30 subfamily. Expressed in leaves, stems and flowers.

Its subcellular location is the mitochondrion. The catalysed reaction is lipid IVA (E. coli) + CMP-3-deoxy-beta-D-manno-octulosonate = alpha-Kdo-(2-&gt;6)-lipid IVA (E. coli) + CMP + H(+). It catalyses the reaction alpha-Kdo-(2-&gt;6)-lipid IVA (E. coli) + CMP-3-deoxy-beta-D-manno-octulosonate = alpha-Kdo-(2-&gt;4)-alpha-Kdo-(2-&gt;6)-lipid IVA (E. coli) + CMP + H(+). It participates in glycolipid biosynthesis; KDO(2)-lipid A biosynthesis; KDO(2)-lipid A from CMP-3-deoxy-D-manno-octulosonate and lipid IV(A): step 1/4. Its pathway is glycolipid biosynthesis; KDO(2)-lipid A biosynthesis; KDO(2)-lipid A from CMP-3-deoxy-D-manno-octulosonate and lipid IV(A): step 2/4. Involved in the biosynthesis of lipid A, a phosphorylated glycolipid that in bacteria anchors the lipopolysaccharide to the outer membrane of the cell. Catalyzes the transfer of two 3-deoxy-D-manno-octulosonate (Kdo) residues from CMP-Kdo to lipid IV(A), the tetraacyldisaccharide-1,4'-bisphosphate precursor of lipid A. Lipid A-like molecules in plants may serve as structural components of the outer membranes of mitochondria and/or chloroplasts, or may be involved in signal transduction or plant defense responses. The sequence is that of Probable 3-deoxy-D-manno-octulosonic acid transferase, mitochondrial (KDTA) from Arabidopsis thaliana (Mouse-ear cress).